A 447-amino-acid polypeptide reads, in one-letter code: N-succinylarginine dihydrolase (447 aa).

Substrate contacts are provided by residues 19–28 (AGLSFGNEAS), Asn110, and 137–138 (HR). Glu174 is an active-site residue. A substrate-binding site is contributed by Arg212. The active site involves His248. Positions 250 and 359 each coordinate substrate. Residue Cys365 is the Nucleophile of the active site.

The protein belongs to the succinylarginine dihydrolase family. As to quaternary structure, homodimer.

The enzyme catalyses N(2)-succinyl-L-arginine + 2 H2O + 2 H(+) = N(2)-succinyl-L-ornithine + 2 NH4(+) + CO2. The protein operates within amino-acid degradation; L-arginine degradation via AST pathway; L-glutamate and succinate from L-arginine: step 2/5. Functionally, catalyzes the hydrolysis of N(2)-succinylarginine into N(2)-succinylornithine, ammonia and CO(2). In Escherichia coli O9:H4 (strain HS), this protein is N-succinylarginine dihydrolase.